The primary structure comprises 644 residues: Chaperone protein DnaK (644 aa).

Thr-200 is subject to Phosphothreonine; by autocatalysis. The disordered stretch occupies residues 603–644 (VMAAEQAKSGGAAPGAAPGGAQQAAPDADVVDADFKEVDDKK). Positions 612–630 (GGAAPGAAPGGAQQAAPDA) are enriched in low complexity. Residues 635–644 (ADFKEVDDKK) are compositionally biased toward basic and acidic residues.

The protein belongs to the heat shock protein 70 family.

Functionally, acts as a chaperone. The sequence is that of Chaperone protein DnaK from Polynucleobacter asymbioticus (strain DSM 18221 / CIP 109841 / QLW-P1DMWA-1) (Polynucleobacter necessarius subsp. asymbioticus).